The chain runs to 70 residues: Sec-independent protein translocase protein TatA (70 aa).

The helical transmembrane segment at 1–21 threads the bilayer; the sequence is MGSFSVWHWLIVLVIVLVLFG. Residues 42–70 are disordered; sequence GMADEDQTPPPADANANAKTVDHKADEIK. A compositionally biased stretch (basic and acidic residues) spans 61–70; that stretch reads TVDHKADEIK.

Belongs to the TatA/E family. In terms of assembly, the Tat system comprises two distinct complexes: a TatABC complex, containing multiple copies of TatA, TatB and TatC subunits, and a separate TatA complex, containing only TatA subunits. Substrates initially bind to the TatABC complex, which probably triggers association of the separate TatA complex to form the active translocon.

Its subcellular location is the cell inner membrane. Functionally, part of the twin-arginine translocation (Tat) system that transports large folded proteins containing a characteristic twin-arginine motif in their signal peptide across membranes. TatA could form the protein-conducting channel of the Tat system. The chain is Sec-independent protein translocase protein TatA from Agrobacterium fabrum (strain C58 / ATCC 33970) (Agrobacterium tumefaciens (strain C58)).